The following is a 561-amino-acid chain: Arginine--tRNA ligase (561 aa).

A 'HIGH' region motif is present at residues 128–138 (ANPTGPLHVGH).

It belongs to the class-I aminoacyl-tRNA synthetase family. Monomer.

It is found in the cytoplasm. It carries out the reaction tRNA(Arg) + L-arginine + ATP = L-arginyl-tRNA(Arg) + AMP + diphosphate. This Methylibium petroleiphilum (strain ATCC BAA-1232 / LMG 22953 / PM1) protein is Arginine--tRNA ligase.